Consider the following 369-residue polypeptide: DNA replication and repair protein RecF (369 aa).

Residue glycine 30–threonine 37 coordinates ATP.

The protein belongs to the RecF family.

The protein resides in the cytoplasm. The RecF protein is involved in DNA metabolism; it is required for DNA replication and normal SOS inducibility. RecF binds preferentially to single-stranded, linear DNA. It also seems to bind ATP. This Oceanobacillus iheyensis (strain DSM 14371 / CIP 107618 / JCM 11309 / KCTC 3954 / HTE831) protein is DNA replication and repair protein RecF.